A 397-amino-acid chain; its full sequence is Tryptophan synthase beta chain (397 aa).

At K91 the chain carries N6-(pyridoxal phosphate)lysine.

The protein belongs to the TrpB family. Tetramer of two alpha and two beta chains. Pyridoxal 5'-phosphate is required as a cofactor.

The catalysed reaction is (1S,2R)-1-C-(indol-3-yl)glycerol 3-phosphate + L-serine = D-glyceraldehyde 3-phosphate + L-tryptophan + H2O. The protein operates within amino-acid biosynthesis; L-tryptophan biosynthesis; L-tryptophan from chorismate: step 5/5. The beta subunit is responsible for the synthesis of L-tryptophan from indole and L-serine. This chain is Tryptophan synthase beta chain, found in Bacillus cereus (strain Q1).